Reading from the N-terminus, the 155-residue chain is Movement protein TGB3 (155 aa).

The Cytoplasmic segment spans residues 1-59; sequence MAMPHPLECCCPQCLPSSESFPIYGEQEIPCSETQAETTPVEKTVRANVLTDILDDHYY. Residues 60-80 form a helical membrane-spanning segment; it reads AILASLFIIALWLLYIYLSSI. The Lumenal segment spans residues 81 to 130; it reads PTETGPYFYQDLNSVKIYGIGATNPEVIAAIHHWQKYPFGESPMWGGLIS. The Involved in plasmodesmata targeting and virus cell-to-cell movement signature appears at 89 to 93; that stretch reads YQDLN. The chain crosses the membrane as a helical span at residues 131–151; sequence VLSILLKPLTLVFALSFFLLL. The interval 150-155 is required for attachment to the host plasmodesmata-associated membrane compartments; the sequence is LLSSKR. The Cytoplasmic portion of the chain corresponds to 152 to 155; it reads SSKR.

Belongs to the virgaviridae TGB3 movement protein family. As to quaternary structure, interacts with movement proteins TGB1 and TGB2. TGB1-TGB3-TGB2 complex formation is enhanced by ATP hydrolysis.

The protein resides in the host cell junction. It is found in the host plasmodesma. Its subcellular location is the host endoplasmic reticulum membrane. It localises to the host cytoplasm. The protein localises to the host cytoskeleton. Its function is as follows. Participates in the transport of viral genome to neighboring plant cells directly through plasmodesmata, without any budding. TGBp2 and TGBp3 are necessary for intracellular delivery of TGBp1-containing vRNPs to plasmodesmata. Can gate plasmodesmata and increase their size exclusion limit. Induces host actin cytoskeleton network thickening, which probably plays a major role in virus cell-to-cell movement. This Hordeum vulgare (Barley) protein is Movement protein TGB3.